Consider the following 329-residue polypeptide: GTPase Obg (329 aa).

Residues 2-160 enclose the Obg domain; that stretch reads YNFKDSVSIT…LNVRLELFLV (159 aa). In terms of domain architecture, OBG-type G spans 161–327; it reads ADIGLVGPPN…LIKEFFILAK (167 aa). GTP contacts are provided by residues 167–174, 192–196, 213–216, 280–283, and 308–310; these read GPPNAGKS, FTTKI, DIPG, NKLD, and SIY. Mg(2+) contacts are provided by Ser-174 and Thr-194.

The protein belongs to the TRAFAC class OBG-HflX-like GTPase superfamily. OBG GTPase family. In terms of assembly, monomer. Mg(2+) is required as a cofactor.

Its subcellular location is the cytoplasm. Functionally, an essential GTPase which binds GTP, GDP and possibly (p)ppGpp with moderate affinity, with high nucleotide exchange rates and a fairly low GTP hydrolysis rate. Plays a role in control of the cell cycle, stress response, ribosome biogenesis and in those bacteria that undergo differentiation, in morphogenesis control. In Borrelia garinii subsp. bavariensis (strain ATCC BAA-2496 / DSM 23469 / PBi) (Borreliella bavariensis), this protein is GTPase Obg.